Reading from the N-terminus, the 186-residue chain is Elongation factor P (186 aa).

It belongs to the elongation factor P family.

It localises to the cytoplasm. The protein operates within protein biosynthesis; polypeptide chain elongation. Involved in peptide bond synthesis. Stimulates efficient translation and peptide-bond synthesis on native or reconstituted 70S ribosomes in vitro. Probably functions indirectly by altering the affinity of the ribosome for aminoacyl-tRNA, thus increasing their reactivity as acceptors for peptidyl transferase. In Prochlorococcus marinus (strain MIT 9211), this protein is Elongation factor P.